The primary structure comprises 274 residues: WIMGHMVNGLEQVSEFLNLGANAIEFDIDFDQNGVAKITHHGIPCDCGRLCTKQTVFTEYLDNIRHVTTPGDPKFREQLILLALDLKLQRIPVEKAYAAGVDVATKLLDHYWQRGKSKARAYILLNLPLVQDYEFIRAFKDTLKNEGYEQYNDKVGVNFTGNEDLDEIRKVLKKVGVDKHVWQADGITSCFARGTDRLTEALKRRDTPGYNYAYKVYAWTLVKYSTMRRSLRLGVDGVMSNFPDRVVEVLKEEEFADKFRMATYDDNPWKKFTG.

Residue H5 is part of the active site. Positions 25 and 27 each coordinate Mg(2+). The active-site Nucleophile is H41. 2 cysteine pairs are disulfide-bonded: C45/C51 and C47/C190. D85 is a Mg(2+) binding site.

It belongs to the arthropod phospholipase D family. Class II subfamily. The cofactor is Mg(2+). In terms of tissue distribution, expressed by the venom gland.

The protein localises to the secreted. It carries out the reaction an N-(acyl)-sphingosylphosphocholine = an N-(acyl)-sphingosyl-1,3-cyclic phosphate + choline. The catalysed reaction is an N-(acyl)-sphingosylphosphoethanolamine = an N-(acyl)-sphingosyl-1,3-cyclic phosphate + ethanolamine. The enzyme catalyses a 1-acyl-sn-glycero-3-phosphocholine = a 1-acyl-sn-glycero-2,3-cyclic phosphate + choline. It catalyses the reaction a 1-acyl-sn-glycero-3-phosphoethanolamine = a 1-acyl-sn-glycero-2,3-cyclic phosphate + ethanolamine. Its function is as follows. Dermonecrotic toxins cleave the phosphodiester linkage between the phosphate and headgroup of certain phospholipids (sphingolipid and lysolipid substrates), forming an alcohol (often choline) and a cyclic phosphate. This toxin acts on sphingomyelin (SM). It may also act on ceramide phosphoethanolamine (CPE), lysophosphatidylcholine (LPC) and lysophosphatidylethanolamine (LPE), but not on lysophosphatidylserine (LPS), and lysophosphatidylglycerol (LPG). It acts by transphosphatidylation, releasing exclusively cyclic phosphate products as second products. Induces dermonecrosis, hemolysis, increased vascular permeability, edema, inflammatory response, and platelet aggregation. This Sicarius cf. damarensis (strain GJB-2008) (Six-eyed sand spider) protein is Dermonecrotic toxin SdSicTox-betaIIB2i.